A 564-amino-acid chain; its full sequence is Pumilio homolog 9 (564 aa).

Residues 222–564 (LEDTVLIGQG…KIFSKTILKK (343 aa)) enclose the PUM-HD domain. Pumilio repeat units follow at residues 249–284 (EIYG…VILL), 285–320 (AIID…LIVS), 321–359 (VLTS…ALVK), 361–396 (GLKP…FVLE), 397–432 (AATK…RLVA), 433–469 (EISR…VQFR), 470–501 (MHYA…EIVR), and 502–539 (ELLC…KLVA).

Its subcellular location is the cytoplasm. Functionally, sequence-specific RNA-binding protein that regulates translation and mRNA stability by binding the 3'-UTR of target mRNAs. This is Pumilio homolog 9 (APUM9) from Arabidopsis thaliana (Mouse-ear cress).